Reading from the N-terminus, the 227-residue chain is MLISIDQVLSKTEVRDLRAQLDAAAWEDGAATAGTLAKSVKRNQQINDGSELCQRLGQHILRRLSSTPLFISAALPRTIYPPKFNRYADGGTYGAHVDSALMFLPGSHQQMRTDLSATLFLAEPEEYDGGELEVEGPFGVQAVKLAAGDMVLYPSSSLHRVTPVTRGARVASFFWIESLVQDEGERTLLFDLDQSIQQLTPLVAPDDPRLVQLTGVYHNLLRRWARP.

The Fe2OG dioxygenase domain occupies 78–178 (TIYPPKFNRY…RVASFFWIES (101 aa)). Fe cation-binding residues include histidine 96, aspartate 98, and histidine 159. Residue arginine 169 coordinates 2-oxoglutarate.

The cofactor is Fe(2+). L-ascorbate is required as a cofactor.

In Acidovorax ebreus (strain TPSY) (Diaphorobacter sp. (strain TPSY)), this protein is PKHD-type hydroxylase Dtpsy_0528.